Here is a 99-residue protein sequence, read N- to C-terminus: Large ribosomal subunit protein bL27 (99 aa).

Positions 1–21 (MAHKKGGGSTRNGRDSRAKRL) are disordered.

The protein belongs to the bacterial ribosomal protein bL27 family.

This is Large ribosomal subunit protein bL27 from Thermomicrobium roseum (strain ATCC 27502 / DSM 5159 / P-2).